We begin with the raw amino-acid sequence, 309 residues long: Histidine protein methyltransferase 1 homolog (309 aa).

Disordered regions lie at residues 1-37 (MSFK…FDSS) and 79-111 (KPFK…NNKD). Residues 25–37 (EESKLDISEFDSS) are compositionally biased toward basic and acidic residues. The segment covering 84–109 (NQDNNNDNNVNSNDKNDNNNNNNNNN) has biased composition (low complexity). Residues 132–136 (LWECS), glycine 159, 179–181 (QDY), 209–211 (GDW), and serine 229 each bind S-adenosyl-L-methionine.

Belongs to the methyltransferase superfamily. METTL18 family.

Its subcellular location is the cytoplasm. The protein localises to the cytosol. The protein resides in the nucleus. It localises to the nucleolus. It carries out the reaction L-histidyl-[protein] + S-adenosyl-L-methionine = N(tele)-methyl-L-histidyl-[protein] + S-adenosyl-L-homocysteine + H(+). Functionally, protein-L-histidine N-tele-methyltransferase that probably monomethylates RPL3. Through the methylation of RPL3 may regulate the dynamics of pre-rRNA processing, ribosome biogenesis, and translation. The protein is Histidine protein methyltransferase 1 homolog of Dictyostelium discoideum (Social amoeba).